The chain runs to 1058 residues: Kinesin-like protein KIN-7M, chloroplastic (1058 aa).

The N-terminal 60 residues, 1–60, are a transit peptide targeting the chloroplast; it reads MASSSSRTRSRSPFSHRRPPSPYSSASSTSSSLINNRLLPRSSSTPTSTVYNSGGVTGSR. The segment at 1–92 is disordered; sequence MASSSSRTRS…QSYPSEGLIG (92 aa). Basic residues predominate over residues 8-19; sequence TRSRSPFSHRRP. Positions 23–49 are enriched in low complexity; sequence YSSASSTSSSLINNRLLPRSSSTPTST. A compositionally biased stretch (polar residues) spans 50–70; the sequence is VYNSGGVTGSRSMSITRTISD. The 318-residue stretch at 104 to 421 folds into the Kinesin motor domain; it reads SISVTVRFRP…LKFASRAKRI (318 aa). 184–191 serves as a coordination point for ATP; that stretch reads GVTSSGKT. Positions 422-509 form a coiled coil; the sequence is EINASRNKII…QKLTKLILVS (88 aa). A disordered region spans residues 549 to 578; the sequence is PSSTLSLASDARRSSSKFKDENSPVGSRAE. Basic and acidic residues predominate over residues 558 to 570; sequence DARRSSSKFKDEN. 4 coiled-coil regions span residues 621–658, 704–826, 873–904, and 935–999; these read PENSKTQIQNLENDIQEKQRQMKSLEQRITESGEASIA, NNEL…AQKR, LEAALAEKEYIEEEFRKKAEEAKRREEALEND, and KEDE…SQAA. Residues 824-838 show a composition bias toward low complexity; sequence QKRNNNSMNSAANRN. A disordered region spans residues 824–847; sequence QKRNNNSMNSAANRNGTRPGRKAR. Residues 922–946 are disordered; it reads ALSIQKSDEAEPAKEDEVTELDNKN. The segment covering 927-946 has biased composition (basic and acidic residues); it reads KSDEAEPAKEDEVTELDNKN. An RING-type zinc finger spans residues 1011–1046; the sequence is CKVCFESPTATILLPCRHFCLCKSCSLACSECPICR.

It belongs to the TRAFAC class myosin-kinesin ATPase superfamily. Kinesin family. KIN-7 subfamily.

The protein localises to the plastid. It is found in the chloroplast. This is Kinesin-like protein KIN-7M, chloroplastic from Arabidopsis thaliana (Mouse-ear cress).